The following is a 175-amino-acid chain: Protein FMP23, mitochondrial (175 aa).

A mitochondrion-targeting transit peptide spans 1–38 (MLINHLSKIRTVRHFSNIKPVLSKEVSRRVIVAPASHF).

It localises to the mitochondrion. Functionally, may be involved in mitochondrial iron or copper homeostatis. This Saccharomyces cerevisiae (strain ATCC 204508 / S288c) (Baker's yeast) protein is Protein FMP23, mitochondrial (FMP23).